The sequence spans 103 residues: MSGRGKGGKGLGKGGAKRHRKILRDNIQGITKPAIRRLARRGGVKRISGLIYEEVRAVLKSFLESVIRDSVTYTEHAKRKTVTSLDVVYALKRQGRTLYGFGG.

Residues 1–14 (MSGRGKGGKGLGKG) show a composition bias toward gly residues. Residues 1–20 (MSGRGKGGKGLGKGGAKRHR) are disordered. Residue Lys-6 is modified to N6-acetyl-N6-methyllysine; alternate. An N6-acetyllysine; alternate mark is found at Lys-6, Lys-9, and Lys-13. N6-methyllysine; alternate occurs at positions 6, 9, and 13. Residues Lys-9 and Lys-13 each carry the N6-butyryllysine; alternate modification. Lys-13 is modified (N6-acetyl-N6-methyllysine; alternate). Lys-17 is subject to N6-acetyllysine. The DNA-binding element occupies 17 to 21 (KRHRK). Lys-32 carries the N6-succinyllysine modification. Arg-56 bears the Omega-N-methylarginine mark. Residues Ser-61 and Ser-65 each carry the phosphoserine modification. Lys-78 carries the N6-succinyllysine modification. Lys-80 bears the N6-acetyllysine mark. At Lys-92 the chain carries N6-glutaryllysine.

Belongs to the histone H4 family. The nucleosome is a histone octamer containing two molecules each of H2A, H2B, H3 and H4 assembled in one H3-H4 heterotetramer and two H2A-H2B heterodimers. The octamer wraps approximately 147 bp of DNA. Histone H4 is a component of the UAF (upstream activation factor) complex which consists of UAF30, RRN5, RRN9, RRN10, and histones H3 and H4. In terms of processing, glutarylation at Lys-92 (H4K91glu) destabilizes nucleosomes by promoting dissociation of the H2A-H2B dimers from nucleosomes.

Its subcellular location is the nucleus. It localises to the chromosome. Functionally, core component of nucleosome. Nucleosomes wrap and compact DNA into chromatin, limiting DNA accessibility to the cellular machineries which require DNA as a template. Histones thereby play a central role in transcription regulation, DNA repair, DNA replication and chromosomal stability. DNA accessibility is regulated via a complex set of post-translational modifications of histones, also called histone code, and nucleosome remodeling. Component of the UAF (upstream activation factor) complex which interacts with the upstream element of the RNA polymerase I promoter and forms a stable preinitiation complex. Together with SPT15/TBP UAF seems to stimulate basal transcription to a fully activated level. This chain is Histone H4 (HHF1), found in Saccharomyces cerevisiae (strain ATCC 204508 / S288c) (Baker's yeast).